A 739-amino-acid chain; its full sequence is UPF0313 protein YgiQ (739 aa).

One can recognise a Radical SAM core domain in the interval 372-650 (AYEMIRFSVN…KALLRYHDPA (279 aa)). [4Fe-4S] cluster contacts are provided by C386, C390, and C393. Positions 685 to 739 (REARRQNRNTRPALTKHTPMATQRQTPATAKKASSTQSRPVNAGAKKRPKAAVGR) are disordered. Residues 704 to 724 (MATQRQTPATAKKASSTQSRP) show a composition bias toward polar residues. Residues 729-739 (AKKRPKAAVGR) show a composition bias toward basic residues.

Belongs to the UPF0313 family. Requires [4Fe-4S] cluster as cofactor.

The polypeptide is UPF0313 protein YgiQ (ygiQ) (Escherichia coli (strain K12)).